The chain runs to 407 residues: Multifunctional CCA protein (407 aa).

The ATP site is built by glycine 8 and arginine 11. CTP-binding residues include glycine 8 and arginine 11. Residues aspartate 21 and aspartate 23 each coordinate Mg(2+). Residues arginine 91, arginine 137, and arginine 140 each contribute to the ATP site. 3 residues coordinate CTP: arginine 91, arginine 137, and arginine 140. In terms of domain architecture, HD spans 228 to 329 (TGMHTLMVSQ…IKIFDKMDLW (102 aa)).

It belongs to the tRNA nucleotidyltransferase/poly(A) polymerase family. Bacterial CCA-adding enzyme type 1 subfamily. As to quaternary structure, monomer. Can also form homodimers and oligomers. The cofactor is Mg(2+). It depends on Ni(2+) as a cofactor.

The enzyme catalyses a tRNA precursor + 2 CTP + ATP = a tRNA with a 3' CCA end + 3 diphosphate. It catalyses the reaction a tRNA with a 3' CCA end + 2 CTP + ATP = a tRNA with a 3' CCACCA end + 3 diphosphate. Functionally, catalyzes the addition and repair of the essential 3'-terminal CCA sequence in tRNAs without using a nucleic acid template. Adds these three nucleotides in the order of C, C, and A to the tRNA nucleotide-73, using CTP and ATP as substrates and producing inorganic pyrophosphate. tRNA 3'-terminal CCA addition is required both for tRNA processing and repair. Also involved in tRNA surveillance by mediating tandem CCA addition to generate a CCACCA at the 3' terminus of unstable tRNAs. While stable tRNAs receive only 3'-terminal CCA, unstable tRNAs are marked with CCACCA and rapidly degraded. The chain is Multifunctional CCA protein from Aliivibrio salmonicida (strain LFI1238) (Vibrio salmonicida (strain LFI1238)).